The chain runs to 446 residues: Exodeoxyribonuclease 7 large subunit (446 aa).

Belongs to the XseA family. Heterooligomer composed of large and small subunits.

The protein localises to the cytoplasm. The enzyme catalyses Exonucleolytic cleavage in either 5'- to 3'- or 3'- to 5'-direction to yield nucleoside 5'-phosphates.. Functionally, bidirectionally degrades single-stranded DNA into large acid-insoluble oligonucleotides, which are then degraded further into small acid-soluble oligonucleotides. The sequence is that of Exodeoxyribonuclease 7 large subunit from Vibrio cholerae serotype O1 (strain ATCC 39541 / Classical Ogawa 395 / O395).